A 611-amino-acid chain; its full sequence is Elongation factor 4 (611 aa).

The tr-type G domain maps to 12–194 (SRIRNFSIIA…QIVEKVPAPA (183 aa)). Residues 24 to 29 (DHGKST) and 141 to 144 (NKID) each bind GTP.

The protein belongs to the TRAFAC class translation factor GTPase superfamily. Classic translation factor GTPase family. LepA subfamily.

Its subcellular location is the cell membrane. It catalyses the reaction GTP + H2O = GDP + phosphate + H(+). Required for accurate and efficient protein synthesis under certain stress conditions. May act as a fidelity factor of the translation reaction, by catalyzing a one-codon backward translocation of tRNAs on improperly translocated ribosomes. Back-translocation proceeds from a post-translocation (POST) complex to a pre-translocation (PRE) complex, thus giving elongation factor G a second chance to translocate the tRNAs correctly. Binds to ribosomes in a GTP-dependent manner. The protein is Elongation factor 4 of Bacillus velezensis (strain DSM 23117 / BGSC 10A6 / LMG 26770 / FZB42) (Bacillus amyloliquefaciens subsp. plantarum).